Consider the following 69-residue polypeptide: Amphipathic peptide Hp1404 (69 aa).

Positions Met1 to Gly23 are cleaved as a signal peptide. At Phe37 the chain carries Phenylalanine amide. The propeptide occupies Gly41–Lys69.

Belongs to the non-disulfide-bridged peptide (NDBP) superfamily. Short antimicrobial peptide (group 4) family. As to expression, expressed by the venom gland.

It localises to the secreted. Its subcellular location is the target cell membrane. Antibacterial activity is decreased by serum. Antimicrobial peptide that acts by inducing concentration-dependent membrane disruption, implying a membrane-lytic mode of action. Acts with potent activity against Gram-positive bacteria (MIC=4.04-16.16 uM) including methicillin-resistant S.aureus (MRSA). Its activity on Gram-negative bacteria is controversial. Li and colleagues (2014) describe no activity towards E.coli and P.aeruginosa, while Kim and colleagues (2018) describe a potent activity towards P.aeruginosa (MIC=3.13-12.5 uM), and Luo and colleagues (2021) describe a potent activity against antibiotic-sensitive and -resistant Acinetobacter baumannii strains (MIC=3.2-10 uM). On S.aureus, possibly acts by impairing an unknown intracellular target and/or by interacting with the membrane, leading to the lateral expansion of the membrane area at high MIC concentrations, resulting in the formation of mesosome-like structures that leads to cell lysis. Shows moderate inhibition of P.aeruginosa biofilm formation. Administration of this peptide at sub-MIC concentrations in multiple treatments does not lead to resistance in S.aureus. Exhibits low toxicity and hemolytic activity against mammalian cell lines and BALB/c mice. In vivo, improves the survival rate of the MRSA infected BALB/c mice in the peritonitis model. The chain is Amphipathic peptide Hp1404 from Heterometrus petersii (Asian forest scorpion).